The sequence spans 321 residues: 4-dihydromethyl-trisporate dehydrogenase (321 aa).

Catalysis depends on Tyr51, which acts as the Proton donor. Residue His113 participates in substrate binding.

Belongs to the aldo/keto reductase family.

The protein operates within pheromone biosynthesis; trisporate biosynthesis. Its function is as follows. Catalyzes the NADP-dependent oxidation of (+) mating-type specific precursor 4-dihydromethyl-trisporate to methyl-trisporate. In Mucor mucedo (Common pinmould), this protein is 4-dihydromethyl-trisporate dehydrogenase (tdh).